A 396-amino-acid polypeptide reads, in one-letter code: S-adenosylmethionine synthase (396 aa).

ATP is bound at residue His-16. Asp-18 provides a ligand contact to Mg(2+). Residue Glu-44 participates in K(+) binding. Residues Glu-57 and Gln-100 each coordinate L-methionine. Residues 100 to 110 (QSPDIAQGVDD) form a flexible loop region. Residues 174 to 176 (DAK), 241 to 242 (RF), Asp-250, 256 to 257 (RK), Ala-273, and Lys-277 each bind ATP. Asp-250 provides a ligand contact to L-methionine. Lys-281 contributes to the L-methionine binding site.

This sequence belongs to the AdoMet synthase family. As to quaternary structure, homotetramer; dimer of dimers. The cofactor is Mg(2+). Requires K(+) as cofactor.

The protein resides in the cytoplasm. It carries out the reaction L-methionine + ATP + H2O = S-adenosyl-L-methionine + phosphate + diphosphate. It participates in amino-acid biosynthesis; S-adenosyl-L-methionine biosynthesis; S-adenosyl-L-methionine from L-methionine: step 1/1. Catalyzes the formation of S-adenosylmethionine (AdoMet) from methionine and ATP. The overall synthetic reaction is composed of two sequential steps, AdoMet formation and the subsequent tripolyphosphate hydrolysis which occurs prior to release of AdoMet from the enzyme. The protein is S-adenosylmethionine synthase of Pediococcus pentosaceus (strain ATCC 25745 / CCUG 21536 / LMG 10740 / 183-1w).